The following is a 283-amino-acid chain: Thymidylate synthase (283 aa).

Arg-22 provides a ligand contact to dUMP. Catalysis depends on Cys-160, which acts as the Nucleophile. DUMP contacts are provided by residues Arg-180–Asp-183, Asn-191, and His-221–Tyr-223. Asp-183 is a (6R)-5,10-methylene-5,6,7,8-tetrahydrofolate binding site. Position 282 (Ser-282) interacts with (6R)-5,10-methylene-5,6,7,8-tetrahydrofolate.

The protein belongs to the thymidylate synthase family. Bacterial-type ThyA subfamily. In terms of assembly, homodimer.

It is found in the cytoplasm. The enzyme catalyses dUMP + (6R)-5,10-methylene-5,6,7,8-tetrahydrofolate = 7,8-dihydrofolate + dTMP. Its pathway is pyrimidine metabolism; dTTP biosynthesis. Its function is as follows. Catalyzes the reductive methylation of 2'-deoxyuridine-5'-monophosphate (dUMP) to 2'-deoxythymidine-5'-monophosphate (dTMP) while utilizing 5,10-methylenetetrahydrofolate (mTHF) as the methyl donor and reductant in the reaction, yielding dihydrofolate (DHF) as a by-product. This enzymatic reaction provides an intracellular de novo source of dTMP, an essential precursor for DNA biosynthesis. This chain is Thymidylate synthase, found in Shewanella piezotolerans (strain WP3 / JCM 13877).